Here is a 785-residue protein sequence, read N- to C-terminus: AP-1 complex subunit gamma-like 2 (785 aa).

The interval 369-379 is essential for ubiquitin-binding; it reads LSLALVNSSNV. The tract at residues 592–617 is disordered; that stretch reads GPQADEEAKESKEAAQLSEAAPVPTE. The 116-residue stretch at 665-780 folds into the GAE domain; sequence APIPDLKVFE…QEIFEVNNLP (116 aa).

It belongs to the adaptor complexes large subunit family. As to quaternary structure, may interact with AP1S1/Sigma1A-adaptin and AP1S2/Sigma1B-adaptin. Probably does not interact with APB1. Interacts (via GAE domain) with RABEP1, NECAP1, CLINT1 and AFTPH/aftiphilin. (Microbial infection) Interacts with HBV major surface antigen L. Interacts with HBV core protein C in a ubiquitin-dependent manner. In terms of tissue distribution, expressed in all but one (skeletal muscle) tissues examined.

It localises to the golgi apparatus membrane. It is found in the cytoplasmic vesicle membrane. Its subcellular location is the endosome membrane. In terms of biological role, may function in protein sorting in late endosomes or multivesucular bodies (MVBs). Its function is as follows. (Microbial infection) Involved in MVB-assisted maturation of hepatitis B virus (HBV). This Homo sapiens (Human) protein is AP-1 complex subunit gamma-like 2 (AP1G2).